The following is a 441-amino-acid chain: AP-2 complex subunit mu (441 aa).

The MHD domain occupies 174–440 (RNELFLDVIE…IGRSGLYETR (267 aa)).

Belongs to the adapter complexes medium subunit family. As to quaternary structure, adapter protein complex 2 (AP-2) is a heterotetramer composed of two large adaptins (alpha-type subunit and beta-type subunits), a medium adaptin (mu-type subunit AP50) and a small adaptin (sigma-type subunit AP17). As to expression, brain, heart, lung, liver, testis and spleen.

It localises to the cell membrane. The protein localises to the membrane. It is found in the coated pit. Functionally, component of the adapter complexes which link clathrin to receptors in coated vesicles. Clathrin-associated protein complexes are believed to interact with the cytoplasmic tails of membrane proteins, leading to their selection and concentration. AP50 is a subunit of the plasma membrane adapter. Essential wnt/egl-20 signaling protein that functions in wnt/egl-20-producing cells. Required for the AP-2 complex-mediated endocytosis of membrane proteins including wntless homolog mig-14 in egl-20-producing cells. During development, regulates the migration of HSN neurons and the left and right Q neuroblasts (QL and QR, respectively) and their descendants, possibly through hox gene and wnt/egl-20 gene target mab-5, and plays a role in establishing ALM and PLM neuronal cell polarity. Regulates AWB sensory neuron cilia membrane expansion during development, potentially via localization of tub-1 and PtdIns(4,5)P2 to the ciliary base. Required for the asymmetric divisions of V5 cells. The chain is AP-2 complex subunit mu (dpy-23) from Caenorhabditis elegans.